The sequence spans 2572 residues: Zinc finger homeobox protein 2 (2572 aa).

Disordered regions lie at residues 1-107 and 343-425; these read MATL…GLPP and LSPP…ADDY. Residues 8–36 show a composition bias toward low complexity; it reads STTGTTPSPGHNAPSLPSDTFSSSTPSDP. 2 stretches are compositionally biased toward polar residues: residues 44 to 53 and 389 to 398; these read ASSTSENMRS and LNQSSPTSKE. 2 C2H2-type zinc fingers span residues 453–476 and 508–532; these read LKCP…REKH and YRCD…SDKH. Disordered regions lie at residues 537–566, 608–655, and 675–710; these read QGFQ…PKTK, LPPG…LRPD, and RKFP…SPPP. Residues 615 to 628 show a composition bias toward pro residues; sequence PGPPPPPGATPTSP. Residues 696–705 are compositionally biased toward low complexity; it reads LLGSSSDSLP. 2 consecutive C2H2-type zinc fingers follow at residues 821-845 and 870-894; these read LRCN…GAAH and YHCL…TPAH. Residues 929-974 form a disordered region; the sequence is QLRTPGKAPVTPLAEPPTPEKDAQNKTEQLASEETENKTGPSRDSA. Residues 954-974 show a composition bias toward polar residues; sequence KTEQLASEETENKTGPSRDSA. The segment at 1009–1032 adopts a C2H2-type 5 zinc-finger fold; the sequence is YRCPLCQEQLVGRPALHFHLSHLH. Residues 1061–1171 form a disordered region; the sequence is PTLSPLDNGQ…PAPADSRHPL (111 aa). The segment covering 1120-1132 has biased composition (pro residues); sequence GQPPSPAPSPVPE. C2H2-type zinc fingers lie at residues 1191–1217 and 1248–1272; these read YKCT…SHLH and FKCT…SVLH. 3 disordered regions span residues 1269–1325, 1389–1408, and 1415–1434; these read SVLH…FLSP, LPAA…LAER, and MAKE…LPNE. Positions 1279-1311 are enriched in basic and acidic residues; the sequence is TKTDSKIEGPERSQEEPKEGETEGEVGTEKKGP. A compositionally biased stretch (pro residues) spans 1392 to 1401; sequence ATPPPPPQPP. The C2H2-type 8 zinc-finger motif lies at 1480–1503; sequence LACGACGKLFSNMLILKTHEEHVH. Positions 1528–1591 are disordered; that stretch reads PPLAEPPKPP…SSRGNLPPLV (64 aa). Positions 1595–1654 form a DNA-binding region, homeobox 1; that stretch reads RRFSRTKFTEFQTQALQSFFETSAYPKDGEVERLASLLGLASRVVVVWFQNARQKARKNA. A C2H2-type 9; degenerate zinc finger spans residues 1670–1696; sequence SGCRRCHATFSCVFELVRHLKKCYDDQ. Residues 1696–1724 show a composition bias toward acidic residues; it reads QTLEEEEEEAERGEEEEEVEEEEVEEEQG. 5 disordered regions span residues 1696–1769, 1820–1860, 1912–2065, 2268–2327, and 2398–2431; these read QTLE…SPAH, AATS…DKRL, ERKG…GMGQ, VQTA…NDAL, and NALL…EAGE. Residues 1728-1738 show a composition bias toward pro residues; it reads PAGPEGPLPEP. The segment at 1769-1791 adopts a C2H2-type 10 zinc-finger fold; that stretch reads HTCDQCAISFSSQDLLTSHRRLH. Residues 1857 to 1916 constitute a DNA-binding region (homeobox 2); the sequence is DKRLRTTILPEQLEILYRWYMQDSNPTRKMLDCISEEVGLKKRVVQVWFQNTRARERKGQ. Residues 1925-1939 show a composition bias toward low complexity; it reads PSPAVKPPATATPAS. Basic and acidic residues predominate over residues 1949–1963; it reads KVDDGTGREAPKREA. Residues 1991-2004 are compositionally biased toward pro residues; it reads TPEPPLPLLPPPPP. Residues 2017-2044 are compositionally biased toward low complexity; sequence SPESEACSLSAGDLSDSSASSLAEPESP. The span at 2045–2061 shows a compositional bias: gly residues; sequence GAGGTSGGPGGGTGVPD. Residues 2065-2124 constitute a DNA-binding region (homeobox 3); the sequence is QRRYRTQMSSLQLKIMKACYEAYRTPTMQECEVLGEEIGLPKRVIQVWFQNARAKEKKAK. Over residues 2284 to 2293 the composition is skewed to polar residues; it reads DQTNTSTAGT. Residues 2305-2315 show a composition bias toward basic and acidic residues; the sequence is LGDKVSSERKP. The segment covering 2402 to 2422 has biased composition (pro residues); that stretch reads QPPPQPPEPTATAPPKPPELP. Residues 2451–2471 form a C2H2-type 11; degenerate zinc finger; sequence YLCRQCKMAFDGEAPATAHQR. Residues 2495–2519 form a C2H2-type 12 zinc finger; that stretch reads YHCLACEVLLSGREALASHLRSSAH. Residues 2551–2572 are disordered; it reads EARLPHTDSNPKTTTTSTLLAL. The span at 2563–2572 shows a compositional bias: low complexity; the sequence is TTTTSTLLAL.

The protein localises to the nucleus. Transcriptional regulator that is critical for the regulation of pain perception and processing of noxious stimuli. This chain is Zinc finger homeobox protein 2 (ZFHX2), found in Homo sapiens (Human).